A 168-amino-acid polypeptide reads, in one-letter code: RNA pyrophosphohydrolase (168 aa).

Residues 8 to 160 (PYRPCVGLAI…KRQVYERVAR (153 aa)) enclose the Nudix hydrolase domain. The Nudix box motif lies at 47–68 (GGIDKGEEPYEAALRELYEETS).

The protein belongs to the Nudix hydrolase family. RppH subfamily. A divalent metal cation is required as a cofactor.

Its function is as follows. Accelerates the degradation of transcripts by removing pyrophosphate from the 5'-end of triphosphorylated RNA, leading to a more labile monophosphorylated state that can stimulate subsequent ribonuclease cleavage. In Azorhizobium caulinodans (strain ATCC 43989 / DSM 5975 / JCM 20966 / LMG 6465 / NBRC 14845 / NCIMB 13405 / ORS 571), this protein is RNA pyrophosphohydrolase.